The primary structure comprises 460 residues: Zinc transporter 6 (460 aa).

Residues 1–33 lie on the Cytoplasmic side of the membrane; the sequence is MGTIHLFRKPQRSFFGKLLQEFRLVAADRRSWK. Residues 34 to 54 traverse the membrane as a helical segment; that stretch reads ILLFGAINVLCTGFLLMWCSS. The Extracellular segment spans residues 55-64; sequence TNSIALTAYT. A helical membrane pass occupies residues 65–85; sequence YLTIFDLFSLITCLISYWVMM. The Cytoplasmic segment spans residues 86–98; the sequence is RKPSPVYSFGFER. The helical transmembrane segment at 99 to 119 threads the bilayer; it reads LEVLAVFASTVLAQLGALFIL. Topologically, residues 120-134 are extracellular; sequence KESAERFLEQPEIHT. The chain crosses the membrane as a helical span at residues 135-155; it reads GRLLVGTFVALSFNLFTMLSI. Over 156–200 the chain is Cytoplasmic; that stretch reads RNKPFAYVSEAASTSWLQEHVADLSRSLCGLIPGLSSIFLPRMNP. The helical transmembrane segment at 201–221 threads the bilayer; the sequence is FVLIDLAGAFALCITYMLIEI. Residues 222-223 are Extracellular-facing; sequence NN. A helical transmembrane segment spans residues 224 to 244; it reads YFAVDTASAIAIALMTFGTMY. The Cytoplasmic portion of the chain corresponds to 245–460; that stretch reads PMSVYSGKVL…GINRMGQPRP (216 aa). A disordered region spans residues 371–390; it reads TPVTSTPAKPSSPPPEFSFN.

It belongs to the cation diffusion facilitator (CDF) transporter (TC 2.A.4) family. SLC30A subfamily. As to quaternary structure, heterodimer with SLC30A5; form a functional zinc ion transmembrane transporter. Expressed in brain and liver, and to a lower extent also in lung. Highly expressed in brain (at protein level).

The protein localises to the golgi apparatus. It is found in the trans-Golgi network membrane. In terms of biological role, has probably no intrinsic transporter activity but together with SLC30A5 forms a functional zinc ion:proton antiporter heterodimer, mediating zinc entry into the lumen of organelles along the secretory pathway. As part of that zinc ion:proton antiporter, contributes to zinc ion homeostasis within the early secretory pathway and regulates the activation and folding of enzymes like alkaline phosphatases and enzymes involved in phosphatidylinositol glycan anchor biosynthesis. In Mus musculus (Mouse), this protein is Zinc transporter 6 (Slc30a6).